A 125-amino-acid polypeptide reads, in one-letter code: MAVYAKDLDNNKELNQKLINDQLKIIDTLLLAEKKNFLVHELPAHYDFSSGDPLASQRDIYYAIIKSLEERGFTVKICMKGDRALLFITWKKIQSIEINKKEEYLRMHFIQDEEKAFYCKFLESR.

Belongs to the asfivirus B125R family.

This is an uncharacterized protein from African swine fever virus (isolate Tick/Malawi/Lil 20-1/1983) (ASFV).